The following is a 406-amino-acid chain: Arginine biosynthesis bifunctional protein ArgJ (406 aa).

Residues Thr156, Lys182, Thr193, Glu279, Asn401, and Thr406 each contribute to the substrate site. Thr193 acts as the Nucleophile in catalysis.

Belongs to the ArgJ family. As to quaternary structure, heterotetramer of two alpha and two beta chains.

It localises to the cytoplasm. It carries out the reaction N(2)-acetyl-L-ornithine + L-glutamate = N-acetyl-L-glutamate + L-ornithine. The catalysed reaction is L-glutamate + acetyl-CoA = N-acetyl-L-glutamate + CoA + H(+). It participates in amino-acid biosynthesis; L-arginine biosynthesis; L-ornithine and N-acetyl-L-glutamate from L-glutamate and N(2)-acetyl-L-ornithine (cyclic): step 1/1. It functions in the pathway amino-acid biosynthesis; L-arginine biosynthesis; N(2)-acetyl-L-ornithine from L-glutamate: step 1/4. Its activity is regulated as follows. Feedback inhibition by L-arginine. Catalyzes two activities which are involved in the cyclic version of arginine biosynthesis: the synthesis of N-acetylglutamate from glutamate and acetyl-CoA as the acetyl donor, and of ornithine by transacetylation between N(2)-acetylornithine and glutamate. The sequence is that of Arginine biosynthesis bifunctional protein ArgJ from Bacillus amyloliquefaciens (Bacillus velezensis).